A 372-amino-acid chain; its full sequence is MKAYIYLENDIFLSAKAFGKSGTFFGELVFNTSLTGYQEIISDPSYAGQFIVFSMPEIGIVGTNENDNESKEIFASGVLMRELSSSFSNFRAKESLQDYLEKHGKIGIYELDTRYLVKMIRNNGNLRAVISTEISNKEDLKIALEKSAKIDEVNFVKEVSTKKNYSHKQGVWNASFQKFNDAKRSEKKVAVIDYGVKTNILNELVEVGFEVEVYPYNVKADELITLYKKGEIQGVFLSNGPGEPRILKQEIAEIKKLAEAKIPMLGICLGHQLLSNAFGYETYKMKFGQHGANHPVINLDTKTVEITAQNHNYNVPEELAQVAHITHRNLFGDNVEGVRYKDYPIISVQHHPESSSGPHESKYIFKEFMNLM.

A CPSase region spans residues 1 to 184 (MKAYIYLEND…SFQKFNDAKR (184 aa)). Residues serine 45, glycine 240, and glycine 242 each coordinate L-glutamine. The Glutamine amidotransferase type-1 domain occupies 188–372 (KVAVIDYGVK…YIFKEFMNLM (185 aa)). The active-site Nucleophile is the cysteine 268. Residues leucine 269, glutamine 272, asparagine 310, and tyrosine 313 each coordinate L-glutamine. Catalysis depends on residues histidine 351 and glutamate 353.

It belongs to the CarA family. As to quaternary structure, composed of two chains; the small (or glutamine) chain promotes the hydrolysis of glutamine to ammonia, which is used by the large (or ammonia) chain to synthesize carbamoyl phosphate. Tetramer of heterodimers (alpha,beta)4.

It catalyses the reaction hydrogencarbonate + L-glutamine + 2 ATP + H2O = carbamoyl phosphate + L-glutamate + 2 ADP + phosphate + 2 H(+). The catalysed reaction is L-glutamine + H2O = L-glutamate + NH4(+). It functions in the pathway amino-acid biosynthesis; L-arginine biosynthesis; carbamoyl phosphate from bicarbonate: step 1/1. Its pathway is pyrimidine metabolism; UMP biosynthesis via de novo pathway; (S)-dihydroorotate from bicarbonate: step 1/3. Functionally, small subunit of the glutamine-dependent carbamoyl phosphate synthetase (CPSase). CPSase catalyzes the formation of carbamoyl phosphate from the ammonia moiety of glutamine, carbonate, and phosphate donated by ATP, constituting the first step of 2 biosynthetic pathways, one leading to arginine and/or urea and the other to pyrimidine nucleotides. The small subunit (glutamine amidotransferase) binds and cleaves glutamine to supply the large subunit with the substrate ammonia. In Campylobacter jejuni subsp. jejuni serotype O:2 (strain ATCC 700819 / NCTC 11168), this protein is Carbamoyl phosphate synthase small chain.